An 88-amino-acid polypeptide reads, in one-letter code: MSSTWIKFLFILTLVLLPYFVAESAVASPESLRKVPNCTLYKSESDCSRTLIPVCADNQMTYYNACYFCLEQLVSPIKYKYHGICTKE.

The first 24 residues, 1-24 (MSSTWIKFLFILTLVLLPYFVAES), serve as a signal peptide directing secretion. A Kazal-like domain is found at 32–87 (LRKVPNCTLYKSESDCSRTLIPVCADNQMTYYNACYFCLEQLVSPIKYKYHGICTK). The N-linked (GlcNAc...) asparagine glycan is linked to Asn-37. 3 cysteine pairs are disulfide-bonded: Cys-38–Cys-69, Cys-47–Cys-66, and Cys-55–Cys-85.

Expressed in epydiymis, in the caput. Also expressed in seminal vesicles.

The protein resides in the secreted. In terms of biological role, probable serine protease inhibitor. The protein is Serine protease inhibitor Kazal-type 11 (Spink11) of Mus musculus (Mouse).